Here is a 665-residue protein sequence, read N- to C-terminus: tRNA 5-methylaminomethyl-2-thiouridine biosynthesis bifunctional protein MnmC (665 aa).

The tract at residues 1-235 (MTITRHAQID…KWEVLRGTFI (235 aa)) is tRNA (mnm(5)s(2)U34)-methyltransferase. The interval 266–665 (IGAGLAGCAT…RGKGKQTVGH (400 aa)) is FAD-dependent cmnm(5)s(2)U34 oxidoreductase.

In the N-terminal section; belongs to the methyltransferase superfamily. tRNA (mnm(5)s(2)U34)-methyltransferase family. This sequence in the C-terminal section; belongs to the DAO family. Requires FAD as cofactor.

The protein resides in the cytoplasm. The enzyme catalyses 5-aminomethyl-2-thiouridine(34) in tRNA + S-adenosyl-L-methionine = 5-methylaminomethyl-2-thiouridine(34) in tRNA + S-adenosyl-L-homocysteine + H(+). Its function is as follows. Catalyzes the last two steps in the biosynthesis of 5-methylaminomethyl-2-thiouridine (mnm(5)s(2)U) at the wobble position (U34) in tRNA. Catalyzes the FAD-dependent demodification of cmnm(5)s(2)U34 to nm(5)s(2)U34, followed by the transfer of a methyl group from S-adenosyl-L-methionine to nm(5)s(2)U34, to form mnm(5)s(2)U34. This is tRNA 5-methylaminomethyl-2-thiouridine biosynthesis bifunctional protein MnmC from Pseudomonas syringae pv. syringae (strain B728a).